Here is a 669-residue protein sequence, read N- to C-terminus: Cell surface receptor daf-1 (669 aa).

Positions 1–19 (MRIRHVVFCLLALVYGAET) are cleaved as a signal peptide. The Extracellular portion of the chain corresponds to 20–170 (SDDDLDERTN…APGPQQSSTW (151 aa)). Residues asparagine 49, asparagine 79, asparagine 133, and asparagine 154 are each glycosylated (N-linked (GlcNAc...) asparagine). The chain crosses the membrane as a helical span at residues 171–191 (LILTILALLTFIVLLGIAIFL). At 192-669 (TRKSWEAKFD…NDDSSRPLLG (478 aa)) the chain is on the cytoplasmic side. The 31-residue stretch at 262 to 292 (NNMKDMLDVLEETSGSGMGPTTLHKLTIGGQ) folds into the GS domain. The 301-residue stretch at 293–593 (IRLTGRVGSG…KRMDERQQLL (301 aa)) folds into the Protein kinase domain. ATP contacts are provided by residues 299–307 (VGSGRFGNV) and lysine 320. Aspartate 423 serves as the catalytic Proton acceptor. Basic and acidic residues-rich tracts occupy residues 611-624 (DRKI…KDES) and 633-650 (VQKE…RETA). The tract at residues 611–669 (DRKILGPQKPKDESPANGAPRIVQKEIDREDEQENWRETAKTPNGHISSNDDSSRPLLG) is disordered. A compositionally biased stretch (polar residues) spans 651-661 (KTPNGHISSND).

The protein belongs to the protein kinase superfamily. TKL Ser/Thr protein kinase family. TGFB receptor subfamily. As to quaternary structure, may interact with daf-4 to regulate dauer larva development. In terms of tissue distribution, head and ventral nerve cord from embryos to adults. Expressed in many sensory neurons. Subset of head neurons show coexpression with daf-4 when dauer/nondauer decision is made. Also expressed in non-neuronal cells: membraneous sheath surrounding the distal end of the intestine and in the distal tip cell of the gonad.

The protein resides in the membrane. It carries out the reaction L-threonyl-[receptor-protein] + ATP = O-phospho-L-threonyl-[receptor-protein] + ADP + H(+). The catalysed reaction is L-seryl-[receptor-protein] + ATP = O-phospho-L-seryl-[receptor-protein] + ADP + H(+). Its function is as follows. Probably involved in a TGF-beta pathway. May be a receptor for TGF-beta-like ligand daf-7. Controls the decision of whether or not larvae enter a developmentally arrested state, known as dauer, in response to environmental conditions. Involved in regulating entry into quiescence triggered by satiety. Involved in sensitivity to CO2 levels. In AWC neurons, acts to promote expression of srsx-3, a member of the GPCR family. The sequence is that of Cell surface receptor daf-1 (daf-1) from Caenorhabditis elegans.